A 271-amino-acid polypeptide reads, in one-letter code: D-methionine-binding lipoprotein MetQ (271 aa).

The signal sequence occupies residues 1–22; the sequence is MAFKFKTFAAVGALIGSLALVG. Cys-23 is lipidated: N-palmitoyl cysteine. The S-diacylglycerol cysteine moiety is linked to residue Cys-23.

It belongs to the NlpA lipoprotein family.

It localises to the cell membrane. Its function is as follows. This protein is a component of a D-methionine permease, a binding protein-dependent, ATP-driven transport system. This is D-methionine-binding lipoprotein MetQ (metQ) from Escherichia coli (strain K12).